A 212-amino-acid polypeptide reads, in one-letter code: Small ribosomal subunit protein uS5 (212 aa).

A disordered region spans residues M1–R42. Residues Y45 to V108 form the S5 DRBM domain.

It belongs to the universal ribosomal protein uS5 family. In terms of assembly, part of the 30S ribosomal subunit. Contacts proteins S4 and S8.

Functionally, with S4 and S12 plays an important role in translational accuracy. Located at the back of the 30S subunit body where it stabilizes the conformation of the head with respect to the body. The protein is Small ribosomal subunit protein uS5 of Corynebacterium kroppenstedtii (strain DSM 44385 / JCM 11950 / CIP 105744 / CCUG 35717).